The following is a 229-amino-acid chain: Uracil-DNA glycosylase (229 aa).

The active-site Proton acceptor is aspartate 65.

Belongs to the uracil-DNA glycosylase (UDG) superfamily. UNG family.

It is found in the cytoplasm. It carries out the reaction Hydrolyzes single-stranded DNA or mismatched double-stranded DNA and polynucleotides, releasing free uracil.. Its function is as follows. Excises uracil residues from the DNA which can arise as a result of misincorporation of dUMP residues by DNA polymerase or due to deamination of cytosine. The sequence is that of Uracil-DNA glycosylase from Brevibacillus brevis (strain 47 / JCM 6285 / NBRC 100599).